Consider the following 239-residue polypeptide: MRLYPAIDIRNGQCVRLRQGQFHDVEVYSHVPANIAMQWEGQGASYIHIVDLDGALAGHSVNDEVIKEIVQTVSVPIQVGGGIRTIQDIEHKLNLGVNRVIIGTKAVENPQFVKEIISTFGADKIVIGIDAKNGMVAIEGWEKVSNYNAVSLALEMKELGVSTIVYTDISKDGMLQGPNIEHTKEMVDLTGLNIIASGGVSSMKDLEELDKIKVSGVIIGKALYERRIELENATRLFEQ.

The Proton acceptor role is filled by Asp8. Asp130 functions as the Proton donor in the catalytic mechanism.

The protein belongs to the HisA/HisF family.

Its subcellular location is the cytoplasm. The catalysed reaction is 1-(5-phospho-beta-D-ribosyl)-5-[(5-phospho-beta-D-ribosylamino)methylideneamino]imidazole-4-carboxamide = 5-[(5-phospho-1-deoxy-D-ribulos-1-ylimino)methylamino]-1-(5-phospho-beta-D-ribosyl)imidazole-4-carboxamide. It functions in the pathway amino-acid biosynthesis; L-histidine biosynthesis; L-histidine from 5-phospho-alpha-D-ribose 1-diphosphate: step 4/9. This is 1-(5-phosphoribosyl)-5-[(5-phosphoribosylamino)methylideneamino] imidazole-4-carboxamide isomerase from Lachnoclostridium phytofermentans (strain ATCC 700394 / DSM 18823 / ISDg) (Clostridium phytofermentans).